The chain runs to 452 residues: Gamma-aminobutyric acid receptor subunit delta (452 aa).

The first 24 residues, 1-24, serve as a signal peptide directing secretion; it reads MDAPARLLAPLLLLCAQQLRGTRA. Topologically, residues 25-251 are extracellular; it reads MNDIGDYVGS…HLRRNRGVYI (227 aa). Residues Asn103 and Asn106 are each glycosylated (N-linked (GlcNAc...) asparagine). A disulfide bridge links Cys164 with Cys178. Residues 252 to 271 form a helical membrane-spanning segment; sequence IQSYMPSVLLVAMSWVSFWI. Residues 272 to 275 lie on the Cytoplasmic side of the membrane; it reads SQAA. Residues 276–298 traverse the membrane as a helical segment; it reads VPARVSLGITTVLTMTTLMVSAR. Over 299–308 the chain is Extracellular; the sequence is SSLPRASAIK. Residues 309–331 form a helical membrane-spanning segment; the sequence is ALDVYFWICYVFVFAALVEYAFA. Topologically, residues 332-426 are cytoplasmic; that stretch reads HFNADYRKKQ…ARLRPIDADT (95 aa). Phosphoserine is present on Ser390. The chain crosses the membrane as a helical span at residues 427 to 449; that stretch reads IDIYARAVFPAAFAAVNVIYWAA. Over 450–452 the chain is Extracellular; it reads YAM.

It belongs to the ligand-gated ion channel (TC 1.A.9) family. Gamma-aminobutyric acid receptor (TC 1.A.9.5) subfamily. GABRD sub-subfamily. Heteropentamer, formed by a combination of alpha (GABRA1-6), beta (GABRB1-3), gamma (GABRG1-3), delta (GABRD), epsilon (GABRE), rho (GABRR1-3), pi (GABRP) and theta (GABRQ) chains, each subunit exhibiting distinct physiological and pharmacological properties.

Its subcellular location is the cell membrane. The enzyme catalyses chloride(in) = chloride(out). Its function is as follows. Delta subunit of the heteropentameric ligand-gated chloride channel gated by gamma-aminobutyric acid (GABA), a major inhibitory neurotransmitter in the brain. GABA-gated chloride channels, also named GABA(A) receptors (GABAAR), consist of five subunits arranged around a central pore and contain GABA active binding site(s) located at the alpha and beta subunit interface(s). When activated by GABA, GABAARs selectively allow the flow of chloride anions across the cell membrane down their electrochemical gradient. GABAARs containing delta/GABRD subunits are predominantly located in extrasynaptic or perisynaptic positions on hippocampus and cerebellar granule cells, and contribute to the tonic GABAergic inhibition. GABAAR containing alpha-4-beta-3-delta subunits can simultaneously bind GABA and histamine where histamine binds at the interface of two neighboring beta subunits, which may be involved in the regulation of sleep and wakefulness. The chain is Gamma-aminobutyric acid receptor subunit delta from Homo sapiens (Human).